Consider the following 122-residue polypeptide: MILQESRMKVADNSGAREVLTIKVLGGSGRKTANIGDIVVCTVKKATPGGVVKKGDVVKAVIVRTKSGVRRKDGTYIKFDENACVIIRDDKSPRGTRIFGPVARELRDSNFMKIVSLAPEVL.

This sequence belongs to the universal ribosomal protein uL14 family. In terms of assembly, part of the 50S ribosomal subunit. Forms a cluster with proteins L3 and L19. In the 70S ribosome, L14 and L19 interact and together make contacts with the 16S rRNA in bridges B5 and B8.

In terms of biological role, binds to 23S rRNA. Forms part of two intersubunit bridges in the 70S ribosome. The protein is Large ribosomal subunit protein uL14 of Lysinibacillus sphaericus (strain C3-41).